Reading from the N-terminus, the 346-residue chain is Phosphoribosylformylglycinamidine cyclo-ligase (346 aa).

This sequence belongs to the AIR synthase family.

Its subcellular location is the cytoplasm. It catalyses the reaction 2-formamido-N(1)-(5-O-phospho-beta-D-ribosyl)acetamidine + ATP = 5-amino-1-(5-phospho-beta-D-ribosyl)imidazole + ADP + phosphate + H(+). It functions in the pathway purine metabolism; IMP biosynthesis via de novo pathway; 5-amino-1-(5-phospho-D-ribosyl)imidazole from N(2)-formyl-N(1)-(5-phospho-D-ribosyl)glycinamide: step 2/2. This chain is Phosphoribosylformylglycinamidine cyclo-ligase, found in Shewanella pealeana (strain ATCC 700345 / ANG-SQ1).